A 125-amino-acid chain; its full sequence is Succinate dehydrogenase assembly factor 3, mitochondrial (125 aa).

A mitochondrion-targeting transit peptide spans 1-30; the sequence is MPGKHVSRVRALYRRILLLHRALPPDLKAL.

Belongs to the complex I LYR family. SDHAF3 subfamily. As to quaternary structure, interacts with Sdhb within an Sdha-Sdhb subcomplex.

The protein localises to the mitochondrion matrix. Plays an essential role in the assembly of succinate dehydrogenase (SDH), an enzyme complex (also referred to as respiratory complex II) that is a component of both the tricarboxylic acid (TCA) cycle and the mitochondrial electron transport chain, and which couples the oxidation of succinate to fumarate with the reduction of ubiquinone (coenzyme Q) to ubiquinol. Promotes maturation of the iron-sulfur protein subunit Sdhb of the SDH catalytic dimer, protecting it from the deleterious effects of oxidants. May act together with SDHAF1. The protein is Succinate dehydrogenase assembly factor 3, mitochondrial of Mus musculus (Mouse).